Here is a 395-residue protein sequence, read N- to C-terminus: Vibriobactin-specific isochorismate synthase (395 aa).

This sequence belongs to the isochorismate synthase family.

The enzyme catalyses chorismate = isochorismate. Its pathway is siderophore biosynthesis; vibriobactin biosynthesis. This Vibrio cholerae serotype O1 (strain ATCC 39315 / El Tor Inaba N16961) protein is Vibriobactin-specific isochorismate synthase (vibC).